We begin with the raw amino-acid sequence, 295 residues long: Sulfotransferase 1A2 (295 aa).

K48–W53 contributes to the 3'-phosphoadenylyl sulfate binding site. K106–H108 lines the substrate pocket. H108 serves as the catalytic Proton acceptor. 3'-phosphoadenylyl sulfate contacts are provided by residues R130, S138, Y193, T227–M232, and F255–G259.

The protein belongs to the sulfotransferase 1 family. Homodimer.

The protein localises to the cytoplasm. The enzyme catalyses a phenol + 3'-phosphoadenylyl sulfate = an aryl sulfate + adenosine 3',5'-bisphosphate + H(+). In terms of biological role, sulfotransferase that utilizes 3'-phospho-5'-adenylyl sulfate (PAPS) as sulfonate donor to catalyze the sulfate conjugation of catecholamines, phenolic drugs and neurotransmitters. Is also responsible for the sulfonation and activation of minoxidil. Mediates the metabolic activation of carcinogenic N-hydroxyarylamines to DNA binding products and could so participate as modulating factor of cancer risk. This chain is Sulfotransferase 1A2 (SULT1A2), found in Homo sapiens (Human).